A 449-amino-acid polypeptide reads, in one-letter code: Maltose-6'-phosphate glucosidase (449 aa).

An NAD(+)-binding site is contributed by 6-72 (FSIVIAGGGS…PDIEFAATTD (67 aa)). Positions 95 and 149 each coordinate substrate. Position 171 (Cys171) interacts with Mn(2+). Asp172 acts as the Proton donor in catalysis. Position 202 (His202) interacts with Mn(2+). Tyr265 (proton acceptor) is an active-site residue. Arg285 provides a ligand contact to substrate.

The protein belongs to the glycosyl hydrolase 4 family. In terms of assembly, homotetramer. Requires Mn(2+) as cofactor. It depends on Fe(2+) as a cofactor. Co(2+) serves as cofactor. Ni(2+) is required as a cofactor. The cofactor is NAD(+).

It carries out the reaction alpha-maltose 6'-phosphate + H2O = D-glucose 6-phosphate + D-glucose. Cellobiose-6'-phosphate and 6-phospho-beta-D-glucopyranoside are not substrates but competitive inhibitors of GlvA. Functionally, hydrolyzes maltose-6'-phosphate and trehalose-6'-phosphate. Is involved in the catabolism of alpha-glycosides accumulated via a phosphoenolpyruvate-dependent maltose phosphotransferase system (PEP-PTS). Is also able to significantly catalyze the hydrolysis of both 6-phospho-alpha- and 6-phospho-beta-glucosides containing activated leaving groups such as p-nitrophenol and does so with retention and inversion, respectively, of the substrate anomeric configuration. The polypeptide is Maltose-6'-phosphate glucosidase (glvA) (Bacillus subtilis (strain 168)).